A 117-amino-acid polypeptide reads, in one-letter code: MNNIIKMLNEEQMKTDVPQFGAGDTVVVKVRVVEGGKERLQAFEGVVIAKRNRGVHSAFTVRKISNGEGVERAFQTHSPIISSIEVKRRGRVRRAKLYYLRDRSGKSARIREKLATK.

It belongs to the bacterial ribosomal protein bL19 family.

Functionally, this protein is located at the 30S-50S ribosomal subunit interface and may play a role in the structure and function of the aminoacyl-tRNA binding site. This is Large ribosomal subunit protein bL19 from Shewanella halifaxensis (strain HAW-EB4).